The chain runs to 541 residues: Chaperonin GroEL (541 aa).

ATP-binding positions include 29-32, 86-90, G413, 476-478, and D492; these read TLGP, DGTTT, and NAA.

This sequence belongs to the chaperonin (HSP60) family. As to quaternary structure, forms a cylinder of 14 subunits composed of two heptameric rings stacked back-to-back. Interacts with the co-chaperonin GroES.

It is found in the cytoplasm. It catalyses the reaction ATP + H2O + a folded polypeptide = ADP + phosphate + an unfolded polypeptide.. In terms of biological role, together with its co-chaperonin GroES, plays an essential role in assisting protein folding. The GroEL-GroES system forms a nano-cage that allows encapsulation of the non-native substrate proteins and provides a physical environment optimized to promote and accelerate protein folding. This chain is Chaperonin GroEL, found in Rhodococcus hoagii (Corynebacterium equii).